The following is a 335-amino-acid chain: MPRLVLASAPAKIILFGEHSVVYGKPAIASAIDLRTYVRAEFNDSGNIKIEAHDIKTPGLIVSFSEDKIYFETDYGKAAEVLSYVRHAIELVLEEADKRTGVSVSITSQIPVGAGLGSSAAVAVATIGAVSKLLDLELSKEEIAKMGHKVELLVQGASSGIDPTVSAIGGFLYYKQGEFEHLPFVELPIVVGYTGSSGSTKELVAMVRRRYEEMPELIEPILESMGKLVDKAKEVIISKLDEEEKFLKLGELMNINHGLLDALGVSTKKLSELVYAARTAGAIGAKLTGAGGGGCMYALAPGKQREVATAIKIAGGTPMITRISKEGLRIEEVRE.

111 to 121 contacts ATP; the sequence is PVGAGLGSSAA. Residue aspartate 162 is the Proton acceptor of the active site.

This sequence belongs to the GHMP kinase family. Mevalonate kinase subfamily. As to quaternary structure, homodimer. Mg(2+) is required as a cofactor.

It localises to the cytoplasm. It carries out the reaction (R)-mevalonate + ATP = (R)-5-phosphomevalonate + ADP + H(+). It participates in isoprenoid biosynthesis; isopentenyl diphosphate biosynthesis via mevalonate pathway; isopentenyl diphosphate from (R)-mevalonate: step 1/3. Catalyzes the phosphorylation of (R)-mevalonate (MVA) to (R)-mevalonate 5-phosphate (MVAP). Functions in the mevalonate (MVA) pathway leading to isopentenyl diphosphate (IPP), a key precursor for the biosynthesis of isoprenoid compounds such as archaeal membrane lipids. The protein is Mevalonate kinase of Pyrococcus abyssi (strain GE5 / Orsay).